A 208-amino-acid chain; its full sequence is Na(+)-translocating NADH-quinone reductase subunit D (208 aa).

The next 5 helical transmembrane spans lie at 42 to 62 (FVMAIAVTLVTGLSNLFVSLI), 72 to 92 (IIVQLAIIASLVIVVDQILKA), 103 to 123 (VFVGLIITNCIVMGRAEAFAM), 131 to 151 (FVDGIGNGLGYGSMLIIVAFF), and 178 to 198 (NGLFLLAPSAFFIIGFVIWGL).

The protein belongs to the NqrDE/RnfAE family. In terms of assembly, composed of six subunits; NqrA, NqrB, NqrC, NqrD, NqrE and NqrF.

The protein resides in the cell inner membrane. The enzyme catalyses a ubiquinone + n Na(+)(in) + NADH + H(+) = a ubiquinol + n Na(+)(out) + NAD(+). Functionally, NQR complex catalyzes the reduction of ubiquinone-1 to ubiquinol by two successive reactions, coupled with the transport of Na(+) ions from the cytoplasm to the periplasm. NqrA to NqrE are probably involved in the second step, the conversion of ubisemiquinone to ubiquinol. In Haemophilus influenzae (strain 86-028NP), this protein is Na(+)-translocating NADH-quinone reductase subunit D.